A 34-amino-acid polypeptide reads, in one-letter code: Subtilosin-A (34 aa).

A cross-link (cyclopeptide (Asn-Gly)) is located at residues 1 to 34; the sequence is NKGCATCSIGIACLVDGPIPDFECAGATGLGLWG. The segment at residues 7–28 is a cross-link (2-cysteinyl-D-allo-threonine (Cys-Thr)); the sequence is CSIGIACLVDGPIPDFECAGAT. A cross-link (2-cysteinyl-L-phenylalanine (Cys-Phe)) is located at residues 13-22; the sequence is CLVDGPIPDF.

It belongs to the bacteriocin class V family. In terms of processing, alpha-amino of Asn-1 is covalently linked with the carboxyl of Gly-34 to form a cyclopeptide. Thioether cross-links are formed between cysteines and the alpha-carbons of other amino acids, Cys-7 to Thr-28 and Cys-13 to Phe-22. In forming this cross-link, Thr-28 is converted to D-amino acid.

It is found in the secreted. Its function is as follows. Has bactericidal activity against some Gram-positive bacteria. This is Subtilosin-A from Cytobacillus firmus (Bacillus firmus).